We begin with the raw amino-acid sequence, 130 residues long: MVMAAAPLQNLCYDGLLQVTSGGNISLPVPSNQVIYAHFEHVDATPAEQGQAGVSVSELQILDALVERLIVQRRVAAEAADMAVQKRQETLLRAAELFSQKQVDETKRRGESLPYTSVEVQGPELFDLRA.

This is an uncharacterized protein from Treponema pallidum (strain Nichols).